Consider the following 158-residue polypeptide: Low molecular weight phosphotyrosine protein phosphatase (158 aa).

Ala2 bears the N-acetylalanine mark. Cys13 (nucleophile) is an active-site residue. Arg19 is a catalytic residue. Residue Asp130 is the Proton donor of the active site. Residues Tyr132 and Tyr133 each carry the phosphotyrosine modification.

The protein belongs to the low molecular weight phosphotyrosine protein phosphatase family. In terms of assembly, interacts with EPHA2; dephosphorylates EPHA2. Interacts with EPHB1. Interacts with the SH3 domain of SPTAN1. There is no interaction observed for isoforms 2 or 3. Phosphorylated by LCK. Phosphorylation at Tyr-132 increases its phosphatase activity. In terms of processing, not phosphorylated. In terms of tissue distribution, expressed in T-lymphocytes.

It localises to the cytoplasm. The enzyme catalyses O-phospho-L-tyrosyl-[protein] + H2O = L-tyrosyl-[protein] + phosphate. It carries out the reaction a phosphate monoester + H2O = an alcohol + phosphate. Its activity is regulated as follows. Inhibited by sulfhydryl reagents. Functionally, acts on tyrosine phosphorylated proteins, low-MW aryl phosphates and natural and synthetic acyl phosphates with differences in substrate specificity between isoform 1 and isoform 2. Its function is as follows. Does not possess phosphatase activity. In Homo sapiens (Human), this protein is Low molecular weight phosphotyrosine protein phosphatase.